Here is a 603-residue protein sequence, read N- to C-terminus: UvrABC system protein C (603 aa).

The region spanning 17–94 (TTSGCYKMLN…IKTHKPDYNV (78 aa)) is the GIY-YIG domain.

It belongs to the UvrC family. Interacts with UvrB in an incision complex.

The protein resides in the cytoplasm. The UvrABC repair system catalyzes the recognition and processing of DNA lesions. UvrC both incises the 5' and 3' sides of the lesion. The N-terminal half is responsible for the 3' incision and the C-terminal half is responsible for the 5' incision. The chain is UvrABC system protein C from Borreliella burgdorferi (strain ATCC 35210 / DSM 4680 / CIP 102532 / B31) (Borrelia burgdorferi).